Here is a 303-residue protein sequence, read N- to C-terminus: Dehydrodolichyl diphosphate synthase 1 (303 aa).

Residues 14–34 (LLFLFLIPCLFITSYIGFPVF) traverse the membrane as a helical segment.

The protein belongs to the UPP synthase family. The cofactor is Mg(2+). Expressed in low levels in the whole plant. Preferentially expressed in roots.

The protein resides in the endoplasmic reticulum membrane. The catalysed reaction is n isopentenyl diphosphate + (2E,6E)-farnesyl diphosphate = a di-trans,poly-cis-polyprenyl diphosphate + n diphosphate. It functions in the pathway protein modification; protein glycosylation. Catalyzes cis-prenyl chain elongation to produce the polyprenyl backbone of dolichol, a glycosyl carrier-lipid required for the biosynthesis of several classes of glycoprotein. The chain is Dehydrodolichyl diphosphate synthase 1 (DPS) from Arabidopsis thaliana (Mouse-ear cress).